The following is a 756-amino-acid chain: Cholesterol uptake protein 1 (756 aa).

An N-terminal signal peptide occupies residues Met-1 to Asn-18. Over Gln-19–Asp-268 the chain is Extracellular. 2 N-linked (GlcNAc...) asparagine glycosylation sites follow: Asn-39 and Asn-63. The Cholesterol-binding sequence motif motif lies at Val-124–Arg-129. N-linked (GlcNAc...) asparagine glycosylation is found at Asn-140, Asn-174, and Asn-257. A helical membrane pass occupies residues Tyr-269–Val-289. Topologically, residues Tyr-290–Val-373 are cytoplasmic. Residues Tyr-374–Ile-394 traverse the membrane as a helical segment. Residues Ser-395–Tyr-421 lie on the Extracellular side of the membrane. A helical transmembrane segment spans residues Phe-422–Ile-442. The Cytoplasmic portion of the chain corresponds to Val-443–Gly-473. The chain crosses the membrane as a helical span at residues Leu-474 to Val-494. Residues Cys-495–Asn-498 are Extracellular-facing. Residues Ile-499–Leu-517 form a helical membrane-spanning segment. Topologically, residues Lys-518–Ser-530 are cytoplasmic. Residues Ala-531–Val-551 traverse the membrane as a helical segment. Residues His-552–Met-554 lie on the Extracellular side of the membrane. A helical transmembrane segment spans residues Ile-555–Phe-575. A Cholesterol-binding sequence motif motif is present at residues Leu-570–Lys-578. The Cytoplasmic segment spans residues Tyr-576–Arg-612. A helical transmembrane segment spans residues Phe-613–Ala-633. Residues His-634–Asp-637 are Extracellular-facing. Residues Phe-638 to Ile-658 traverse the membrane as a helical segment. The Cytoplasmic portion of the chain corresponds to Leu-659–Arg-671. The helical transmembrane segment at Ala-672–Gln-692 threads the bilayer. The Extracellular segment spans residues Arg-693–Ala-728. Residues Phe-729–Met-749 traverse the membrane as a helical segment. Topologically, residues Arg-750 to Phe-756 are cytoplasmic.

It belongs to the SID1 family. Highly expressed along the intestine with expression also detected in the pharynx, especially at the terminal bulb, and in the excretory gland cells.

It localises to the cell membrane. The catalysed reaction is cholesterol(in) = cholesterol(out). Its function is as follows. Cholesterol-binding protein which is involved in dietary cholesterol uptake from the environment. Does not play a role in double-stranded RNA transport in contrast to other SID1 family members. The polypeptide is Cholesterol uptake protein 1 (Caenorhabditis elegans).